A 330-amino-acid chain; its full sequence is Ribosomal RNA small subunit methyltransferase C (330 aa).

Belongs to the methyltransferase superfamily. RsmC family. As to quaternary structure, monomer.

The protein localises to the cytoplasm. The catalysed reaction is guanosine(1207) in 16S rRNA + S-adenosyl-L-methionine = N(2)-methylguanosine(1207) in 16S rRNA + S-adenosyl-L-homocysteine + H(+). Functionally, specifically methylates the guanine in position 1207 of 16S rRNA in the 30S particle. This is Ribosomal RNA small subunit methyltransferase C from Haemophilus influenzae (strain 86-028NP).